Reading from the N-terminus, the 288-residue chain is MKRDITQLLSPELSQSSSRNDKKRKPTNSNKKVQTVLNFPSSSPNASQSTTCPTCGMTYYSHVSKDNDVHNKYHFNFINGIPWPTSFCNNVLERFIVVDHTTGKAKGTSKSKKSQAASKETLVMTIDRRASKQVKRVEEILKVVNGELNAASDGKAWQKDHKGPIQGRAFIVVIDGRAIGICTTEPIQDVDQQCRWIIHRTQALVPNQVNRSIKLGISRIWIAPKWRRYGLARRLLDIVLVHSVYGIVLDKKEIGFSQPSFSGGLLAKSFNGVTHKSGEILIPVYLEE.

A disordered region spans residues 1-50; sequence MKRDITQLLSPELSQSSSRNDKKRKPTNSNKKVQTVLNFPSSSPNASQST. Residues 7–18 show a composition bias toward low complexity; sequence QLLSPELSQSSS. Residues 27 to 50 are compositionally biased toward polar residues; the sequence is TNSNKKVQTVLNFPSSSPNASQST. The CCHH-type zinc-finger motif lies at 50-74; that stretch reads TTCPTCGMTYYSHVSKDNDVHNKYH.

It belongs to the acetyltransferase family. ECO subfamily.

Its subcellular location is the nucleus. Probable acetyltransferase required for the establishment of sister chromatid cohesion and couple the processes of cohesion and DNA replication to ensure that only sister chromatids become paired together. In contrast to the structural cohesins, the deposition and establishment factors are required only during S phase. Acts by acetylating the cohesin complex component SMC3. This chain is N-acetyltransferase ECO1 (ECO1), found in Debaryomyces hansenii (strain ATCC 36239 / CBS 767 / BCRC 21394 / JCM 1990 / NBRC 0083 / IGC 2968) (Yeast).